We begin with the raw amino-acid sequence, 1598 residues long: Fatty acid synthase subunit alpha (1598 aa).

The segment at 96–134 (RTQPHKSSAPQEPVPKAAPKAAPPVPVATAPLPEPGRQV) is disordered. Positions 104-115 (APQEPVPKAAPK) are enriched in low complexity. Positions 143–221 (DVPIQSRDVI…QIVSGSTSTT (79 aa)) constitute a Carrier domain. At S181 the chain carries O-(pantetheine 4'-phosphoryl)serine. Residues 543 to 784 (LKGKTVLLTG…LAALLVNPFA (242 aa)) are ketoreductase (KR) domain. A disordered region spans residues 818 to 844 (KQDSTSTPTHQHLPSHHHVDEPEIGKP). The segment covering 820-829 (DSTSTPTHQH) has biased composition (polar residues). In terms of domain architecture, Ketosynthase family 3 (KS3) spans 992–1524 (HEIVLTRDLA…QKGAQAIIVH (533 aa)). C1175 serves as the catalytic For beta-ketoacyl synthase activity. A disordered region spans residues 1280–1301 (ASDKTGRSVPSPGKGTLTNARE). Active-site for beta-ketoacyl synthase activity residues include H1409 and H1450.

Belongs to the thiolase-like superfamily. Fungal fatty acid synthetase subunit alpha family. In terms of assembly, fatty acid synthase is composed of alpha and beta subunits.

It carries out the reaction acetyl-CoA + n malonyl-CoA + 2n NADPH + 4n H(+) = a long-chain-acyl-CoA + n CoA + n CO2 + 2n NADP(+).. The catalysed reaction is a fatty acyl-[ACP] + malonyl-[ACP] + H(+) = a 3-oxoacyl-[ACP] + holo-[ACP] + CO2. It catalyses the reaction a (3R)-hydroxyacyl-[ACP] + NADP(+) = a 3-oxoacyl-[ACP] + NADPH + H(+). The protein operates within mycotoxin biosynthesis. Fatty acid synthase subunit alpha; part of the gene cluster that mediates the biosynthesis of gramillins A and B, bicyclic lipopeptides that induce cell death in maize leaves but not in wheat leaves. The nonribosomal peptide synthetase GRA1 incorporates respectively a glutamic adic (Glu), a leucine (Leu), a serine (Ser), a hydroxyglutamine (HOGln), a 2-amino decanoic acid, and 2 cysteins (CysB and CysA). The biosynthesis of 2-amino decanoic acid incorporated in gramillins could be initiated by a fatty acid synthase composed of the alpha and beta subunits FGSG_00036 and FGSG_11656. The cytochrome P450 monooxygenase FGSG_15680 could hydroxylate the fatty acid chain. Subsequent oxidation to the ketone by the oxidoreductase FGSG_00048 and transamination by aminotransferase FGSG_00049 could form 2-amino-decanoic acid. On the other hand, FGSG_15680 could also be responsible for the HO-modified glutamine at the gamma-position. Whether hydroxylation occurs on the fully assembled product or on the Gln residue prior to assembly into the gramillins requires further proof. The thioredoxin FGSG_00043 could also be required for the disulfide-bond formation between CysA and CysB. The specific involvement of the remaining proteins from the cluster is more difficult to discern, but could have broader regulatory (FGSG_00040 and FGSG_11657) or enzymatic functions (FGSG_00044 and FGSG_00045). The final C-domain of GRA1 does not possess the expected sequence of a termination CT domain, often implicated in macrocyclization and release of a cyclopeptidein fungal NRPs; and the thioesterase FGSG_00047 may act in concert with the terminal C-domain of GRA1 to catalyze the formation of the macrocyclic anhydride and release of the products. This is Fatty acid synthase subunit alpha from Gibberella zeae (strain ATCC MYA-4620 / CBS 123657 / FGSC 9075 / NRRL 31084 / PH-1) (Wheat head blight fungus).